The sequence spans 94 residues: Large ribosomal subunit protein eL14 (94 aa).

It belongs to the eukaryotic ribosomal protein eL14 family.

This Methanopyrus kandleri (strain AV19 / DSM 6324 / JCM 9639 / NBRC 100938) protein is Large ribosomal subunit protein eL14.